The primary structure comprises 345 residues: Hydroxymethylglutaryl-CoA synthase (345 aa).

Residue aspartate 28 coordinates (3S)-3-hydroxy-3-methylglutaryl-CoA. Residue glutamate 80 is the Proton donor/acceptor of the active site. 2 residues coordinate (3S)-3-hydroxy-3-methylglutaryl-CoA: cysteine 112 and threonine 153. The active-site Acyl-thioester intermediate is the cysteine 112. Arginine 199 is a CoA binding site. Residues threonine 201 and histidine 234 each contribute to the (3S)-3-hydroxy-3-methylglutaryl-CoA site. The active-site Proton donor/acceptor is histidine 234. Lysine 239 serves as a coordination point for CoA. Arginine 243, asparagine 266, and serine 296 together coordinate (3S)-3-hydroxy-3-methylglutaryl-CoA.

It belongs to the thiolase-like superfamily. Archaeal HMG-CoA synthase family. In terms of assembly, interacts with acetoacetyl-CoA thiolase that catalyzes the precedent step in the pathway and with a DUF35 protein. The acetoacetyl-CoA thiolase/HMG-CoA synthase complex channels the intermediate via a fused CoA-binding site, which allows for efficient coupling of the endergonic thiolase reaction with the exergonic HMGCS reaction.

It carries out the reaction acetoacetyl-CoA + acetyl-CoA + H2O = (3S)-3-hydroxy-3-methylglutaryl-CoA + CoA + H(+). The protein operates within metabolic intermediate biosynthesis; (R)-mevalonate biosynthesis; (R)-mevalonate from acetyl-CoA: step 2/3. Its function is as follows. Catalyzes the condensation of acetyl-CoA with acetoacetyl-CoA to form 3-hydroxy-3-methylglutaryl-CoA (HMG-CoA). Functions in the mevalonate (MVA) pathway leading to isopentenyl diphosphate (IPP), a key precursor for the biosynthesis of isoprenoid compounds that are building blocks of archaeal membrane lipids. The protein is Hydroxymethylglutaryl-CoA synthase of Methanocaldococcus jannaschii (strain ATCC 43067 / DSM 2661 / JAL-1 / JCM 10045 / NBRC 100440) (Methanococcus jannaschii).